The sequence spans 354 residues: Membrane progestin receptor alpha-B (354 aa).

Over 1–76 the chain is Cytoplasmic; it reads MATVVMEQIG…LTLFQRHNES (76 aa). The chain crosses the membrane as a helical span at residues 77–97; it reads VNVWTHLLASLIILVKFQELS. Residues 98 to 110 are Extracellular-facing; it reads ETVDFLRDPHAQP. The chain crosses the membrane as a helical span at residues 111-131; sequence MFILLLAAFTYLGCSALAHLL. Residues 132–141 are Cytoplasmic-facing; that stretch reads SAKSEISHYT. The chain crosses the membrane as a helical span at residues 142-162; it reads FYFLDYVGVAVYQYGSALAHF. Residues 163-175 are Extracellular-facing; sequence YYVVEEEWHAQVR. A helical transmembrane segment spans residues 176–196; sequence TFFLPASAFLAWLSCTGCCYG. At 197–244 the chain is on the cytoplasmic side; it reads KYASPKLPKFVHKLFQVVPSGLAYCLDISPVLHRIYRCYSSEHWCADQ. The chain crosses the membrane as a helical span at residues 245-265; the sequence is AVVYHCYQVLFFLISAYFFSY. The Extracellular segment spans residues 266 to 277; sequence PHPERWFPGRCD. A helical transmembrane segment spans residues 278–298; the sequence is FIGQGHQIFHVFLVLCTLVQI. Residues 299–318 are Cytoplasmic-facing; that stretch reads EAVRLDYTERRRLYEHLHGD. The helical transmembrane segment at 319 to 339 threads the bilayer; sequence LAHDAVALFIFTACCSALTAF. At 340–354 the chain is on the extracellular side; it reads YVRKRVKTYLEEKQE.

This sequence belongs to the ADIPOR family.

It is found in the cell membrane. Its function is as follows. Steroid membrane receptor. Signals upon progestin binding, resulting in rapid activation of MAPK and down-regulation of adenylyl cyclase activity. Interacts with steroids with varying degrees of affinity, showing specificity for activation by the maturation-inducing steroid (MIS) 4-pregnen-17,20beta-diol-3-one (17,20beta-DHP). Capable of mediating progestin-induced oocyte maturation. This is Membrane progestin receptor alpha-B (paqr7b) from Danio rerio (Zebrafish).